A 254-amino-acid polypeptide reads, in one-letter code: Flavin-dependent thymidylate synthase (254 aa).

The ThyX domain maps to 7-237; the sequence is LRVQLIAKTE…PAVFADFEIT (231 aa). Residues 92-95, 103-107, and His-176 each bind dUMP; these read ELIR and QLSQR. Residues 95 to 97 and Gln-103 each bind FAD; that span reads RHR. The ThyX motif signature appears at 95–105; that stretch reads RHRHFSYSQLS. FAD contacts are provided by residues 192–194 and His-198; that span reads NYR. Arg-203 provides a ligand contact to dUMP. Catalysis depends on Arg-203, which acts as the Involved in ionization of N3 of dUMP, leading to its activation.

The protein belongs to the thymidylate synthase ThyX family. In terms of assembly, homotetramer. It depends on FAD as a cofactor.

The catalysed reaction is dUMP + (6R)-5,10-methylene-5,6,7,8-tetrahydrofolate + NADPH + H(+) = dTMP + (6S)-5,6,7,8-tetrahydrofolate + NADP(+). It participates in pyrimidine metabolism; dTTP biosynthesis. Its function is as follows. Catalyzes the reductive methylation of 2'-deoxyuridine-5'-monophosphate (dUMP) to 2'-deoxythymidine-5'-monophosphate (dTMP) while utilizing 5,10-methylenetetrahydrofolate (mTHF) as the methyl donor, and NADPH and FADH(2) as the reductant. This is Flavin-dependent thymidylate synthase from Mycobacterium leprae (strain Br4923).